The sequence spans 143 residues: Mini-ribonuclease 3 (143 aa).

D35 is an active-site residue.

This sequence belongs to the MrnC RNase family. In terms of assembly, homodimer. Mg(2+) is required as a cofactor.

It localises to the cytoplasm. Functionally, involved in correct processing of both the 5' and 3' ends of 23S rRNA precursor. Processes 30S rRNA precursor transcript even in absence of ribonuclease 3 (Rnc); Rnc processes 30S rRNA into smaller rRNA precursors. The chain is Mini-ribonuclease 3 from Synechocystis sp. (strain ATCC 27184 / PCC 6803 / Kazusa).